The chain runs to 237 residues: UDP-2,3-diacylglucosamine hydrolase (237 aa).

Residues Asp-9, His-11, Asp-42, Asn-80, and His-115 each coordinate Mn(2+). A substrate-binding site is contributed by 80–81 (NR). 5 residues coordinate substrate: Asp-123, Ser-161, Lys-165, Lys-168, and His-196. 2 residues coordinate Mn(2+): His-196 and His-198.

This sequence belongs to the LpxH family. Mn(2+) serves as cofactor.

The protein localises to the cell inner membrane. The protein resides in the cytoplasm. It catalyses the reaction UDP-2-N,3-O-bis[(3R)-3-hydroxytetradecanoyl]-alpha-D-glucosamine + H2O = 2-N,3-O-bis[(3R)-3-hydroxytetradecanoyl]-alpha-D-glucosaminyl 1-phosphate + UMP + 2 H(+). It functions in the pathway glycolipid biosynthesis; lipid IV(A) biosynthesis; lipid IV(A) from (3R)-3-hydroxytetradecanoyl-[acyl-carrier-protein] and UDP-N-acetyl-alpha-D-glucosamine: step 4/6. Its function is as follows. Hydrolyzes the pyrophosphate bond of UDP-2,3-diacylglucosamine to yield 2,3-diacylglucosamine 1-phosphate (lipid X) and UMP by catalyzing the attack of water at the alpha-P atom. Involved in the biosynthesis of lipid A, a phosphorylated glycolipid that anchors the lipopolysaccharide to the outer membrane of the cell. This chain is UDP-2,3-diacylglucosamine hydrolase, found in Haemophilus influenzae (strain ATCC 51907 / DSM 11121 / KW20 / Rd).